A 184-amino-acid chain; its full sequence is ATP synthase subunit b (184 aa).

The chain crosses the membrane as a helical span at residues 4 to 24; sequence LSVLFALVASPALAASGPFFS.

This sequence belongs to the ATPase B chain family. As to quaternary structure, F-type ATPases have 2 components, F(1) - the catalytic core - and F(0) - the membrane proton channel. F(1) has five subunits: alpha(3), beta(3), gamma(1), delta(1), epsilon(1). F(0) has three main subunits: a(1), b(2) and c(10-14). The alpha and beta chains form an alternating ring which encloses part of the gamma chain. F(1) is attached to F(0) by a central stalk formed by the gamma and epsilon chains, while a peripheral stalk is formed by the delta and b chains.

It localises to the cell inner membrane. Its function is as follows. F(1)F(0) ATP synthase produces ATP from ADP in the presence of a proton or sodium gradient. F-type ATPases consist of two structural domains, F(1) containing the extramembraneous catalytic core and F(0) containing the membrane proton channel, linked together by a central stalk and a peripheral stalk. During catalysis, ATP synthesis in the catalytic domain of F(1) is coupled via a rotary mechanism of the central stalk subunits to proton translocation. In terms of biological role, component of the F(0) channel, it forms part of the peripheral stalk, linking F(1) to F(0). This Paracoccus denitrificans (strain Pd 1222) protein is ATP synthase subunit b.